A 191-amino-acid chain; its full sequence is Ubiquinol-cytochrome c reductase iron-sulfur subunit (191 aa).

Residues 18 to 35 (ATAATGVVVTGAAVWPLI) form a helical membrane-spanning segment. A Rieske domain is found at 94–189 (RDTSAENANK…AAFVDETTIK (96 aa)). The segment at 95 to 116 (DTSAENANKPGAEATDENRTLP) is disordered. [2Fe-2S] cluster-binding residues include Cys133, His135, Cys153, and His156. Residues Cys138 and Cys155 are joined by a disulfide bond.

It belongs to the Rieske iron-sulfur protein family. In terms of assembly, the main subunits of complex b-c1 are: cytochrome b, cytochrome c1 and the Rieske protein. [2Fe-2S] cluster serves as cofactor.

It is found in the cell membrane. The catalysed reaction is a quinol + 2 Fe(III)-[cytochrome c](out) = a quinone + 2 Fe(II)-[cytochrome c](out) + 2 H(+)(out). Component of the ubiquinol-cytochrome c reductase complex (complex III or cytochrome b-c1 complex), which is a respiratory chain that generates an electrochemical potential coupled to ATP synthesis. This Rhodobacter capsulatus (strain ATCC BAA-309 / NBRC 16581 / SB1003) protein is Ubiquinol-cytochrome c reductase iron-sulfur subunit (petA).